Reading from the N-terminus, the 158-residue chain is UPF0336 protein Mb0654 (158 aa).

This sequence belongs to the UPF0336 family.

This Mycobacterium bovis (strain ATCC BAA-935 / AF2122/97) protein is UPF0336 protein Mb0654.